A 239-amino-acid chain; its full sequence is tRNA1(Val) (adenine(37)-N6)-methyltransferase (239 aa).

It belongs to the methyltransferase superfamily. tRNA (adenine-N(6)-)-methyltransferase family.

The protein resides in the cytoplasm. It carries out the reaction adenosine(37) in tRNA1(Val) + S-adenosyl-L-methionine = N(6)-methyladenosine(37) in tRNA1(Val) + S-adenosyl-L-homocysteine + H(+). Functionally, specifically methylates the adenine in position 37 of tRNA(1)(Val) (anticodon cmo5UAC). In Vibrio vulnificus (strain CMCP6), this protein is tRNA1(Val) (adenine(37)-N6)-methyltransferase.